The chain runs to 553 residues: Protein PALS2 (553 aa).

2 consecutive L27 domains span residues 1-48 and 49-107; these read MQQV…EDSK and LEAV…YDSP. In terms of domain architecture, PDZ spans 129–208; sequence ILGIHKKAGE…SVTLKILPSY (80 aa). Residues 228-297 enclose the SH3 domain; the sequence is VRQVFVKCHF…PSQFLEEKRK (70 aa). Residues 351 to 538 form the Guanylate kinase-like domain; it reads RKTLVLIGAQ…AFEKLQTAIE (188 aa). Tyr-513 bears the Phosphotyrosine mark.

The protein belongs to the MAGUK family. In terms of assembly, interacts with CADM1. Interacts with the LIN7 proteins.

It is found in the membrane. This chain is Protein PALS2, found in Mus musculus (Mouse).